The sequence spans 1828 residues: Proteasome activator complex subunit 4 (1828 aa).

6 HEAT repeats span residues 462 to 506 (PEGP…LVDC), 985 to 1024 (NFCC…NHGG), 1164 to 1202 (YVLP…QLKR), 1339 to 1377 (DAFL…GSKH), 1621 to 1659 (PVQV…YNLF), and 1665 to 1703 (EESV…CNFL). The tract at residues 1635 to 1723 (ARSSSWHARY…EALCKTRLPK (89 aa)) is bromodomain-like (BRDL).

Belongs to the BLM10 family. In terms of assembly, homodimer. Interacts with the 20S and 26S proteasomes.

It localises to the cytoplasm. It is found in the cytosol. The protein resides in the nucleus. The protein localises to the nucleus speckle. In terms of biological role, associated component of the proteasome that specifically recognizes acetylated histones and promotes ATP- and ubiquitin-independent degradation of core histones during DNA damage response. Recognizes and binds acetylated histones via its bromodomain-like (BRDL) region and activates the proteasome by opening the gated channel for substrate entry. Binds to the core proteasome via its C-terminus, which occupies the same binding sites as the proteasomal ATPases, opening the closed structure of the proteasome via an active gating mechanism. involved in DNA damage response in somatic cells: binds to acetylated histones and promotes degradation of histones. This is Proteasome activator complex subunit 4 (psme4) from Xenopus laevis (African clawed frog).